A 140-amino-acid chain; its full sequence is FK506-binding protein 2 (140 aa).

A signal peptide spans 1 to 19 (MKFTTGLSVLLFFVLQVFA). In terms of domain architecture, PPIase FKBP-type spans 43–132 (GDVVSVHYTG…IFETELVDIQ (90 aa)).

It belongs to the FKBP-type PPIase family. FKBP2 subfamily.

It localises to the endoplasmic reticulum. It catalyses the reaction [protein]-peptidylproline (omega=180) = [protein]-peptidylproline (omega=0). With respect to regulation, inhibited by both FK506 and rapamycin. Its function is as follows. PPIases accelerate the folding of proteins. It catalyzes the cis-trans isomerization of proline imidic peptide bonds in oligopeptides. The sequence is that of FK506-binding protein 2 (FPR2) from Kluyveromyces lactis (strain ATCC 8585 / CBS 2359 / DSM 70799 / NBRC 1267 / NRRL Y-1140 / WM37) (Yeast).